The chain runs to 213 residues: Ras-related protein Rab-25 (213 aa).

Residues Ser-21, Gly-24, Lys-25, Thr-26, Asn-27, Ser-38, His-39, Thr-43, and Thr-44 each coordinate GTP. Thr-26 serves as a coordination point for Mg(2+). 2 short sequence motifs (switch) span residues 35–49 (NEFS…GVEF) and 67–84 (DTAG…YYRG). 2 residues coordinate Mg(2+): Thr-44 and Asp-67. The GTP site is built by Gly-70, Asn-125, Lys-126, Asp-128, Ala-156, and Leu-157. S-geranylgeranyl cysteine attachment occurs at residues Cys-209 and Cys-210. At Cys-210 the chain carries Cysteine methyl ester. A propeptide spans 211-213 (ISL) (removed in mature form).

This sequence belongs to the small GTPase superfamily. Rab family. As to quaternary structure, interacts (GTP-bound form) with RAB11FIP1, RAB11FIP2, RAB11FIP3 and RAB11FIP4. Interacts (via the hypervariable C-terminal region) with ITGB1 (via the cytoplasmic region); the interaction is GTP-dependent. Interacts with ITGAV. Associates with the integrin alpha-V/beta-1 heterodimer. Interacts with VPS33B. Mg(2+) is required as a cofactor.

It is found in the cell membrane. Its subcellular location is the cell projection. The protein resides in the pseudopodium membrane. The protein localises to the cytoplasmic vesicle. The catalysed reaction is GTP + H2O = GDP + phosphate + H(+). With respect to regulation, regulated by guanine nucleotide exchange factors (GEFs) which promote the exchange of bound GDP for free GTP. Regulated by GTPase activating proteins (GAPs) which increase the GTP hydrolysis activity. Inhibited by GDP dissociation inhibitors (GDIs) which prevent Rab-GDP dissociation. In terms of biological role, the small GTPases Rab are key regulators of intracellular membrane trafficking, from the formation of transport vesicles to their fusion with membranes. Rabs cycle between an inactive GDP-bound form and an active GTP-bound form that is able to recruit to membranes different set of downstream effectors directly responsible for vesicle formation, movement, tethering and fusion. RAB25 regulates epithelial cell differentiation, proliferation and survival, thereby playing key roles in tumorigenesis. Promotes invasive migration of cells in which it functions to localize and maintain integrin alpha-V/beta-1 at the tips of extending pseudopodia. Involved in the regulation of epithelial morphogenesis through the control of CLDN4 expression and localization at tight junctions. May selectively regulate the apical recycling pathway. Together with MYO5B regulates transcytosis. The chain is Ras-related protein Rab-25 from Mus musculus (Mouse).